Here is a 218-residue protein sequence, read N- to C-terminus: uncharacterized protein (218 aa).

7 helical membrane passes run 9-29 (LLVI…VIAM), 42-62 (AIIL…SAAV), 67-87 (IPFL…QLLI), 107-127 (TIVL…AGAS), 134-154 (VVIG…LIHI), 159-179 (IPLL…EMIV), and 192-212 (GTVE…ASIY).

The protein belongs to the TerC family.

It localises to the cell membrane. This is an uncharacterized protein from Bacillus subtilis (strain 168).